We begin with the raw amino-acid sequence, 289 residues long: Protease HtpX homolog (289 aa).

Helical transmembrane passes span 10 to 30 (TAAL…VIGS) and 34 to 54 (STTP…YGYW). His138 contacts Zn(2+). The active site involves Glu139. A Zn(2+)-binding site is contributed by His142. Transmembrane regions (helical) follow at residues 153–173 (VAAA…IFGG) and 182–202 (LAVM…QSAI). Residue Glu207 coordinates Zn(2+).

The protein belongs to the peptidase M48B family. The cofactor is Zn(2+).

The protein localises to the cell membrane. This chain is Protease HtpX homolog, found in Arthrobacter sp. (strain FB24).